Reading from the N-terminus, the 442-residue chain is tRNA modification GTPase MnmE (442 aa).

3 residues coordinate (6S)-5-formyl-5,6,7,8-tetrahydrofolate: R27, E84, and K124. Residues G221–E366 enclose the TrmE-type G domain. GTP is bound by residues N231 to S236, S250 to T256, and D275 to G278. Mg(2+)-binding residues include S235 and T256. Position 442 (K442) interacts with (6S)-5-formyl-5,6,7,8-tetrahydrofolate.

The protein belongs to the TRAFAC class TrmE-Era-EngA-EngB-Septin-like GTPase superfamily. TrmE GTPase family. Homodimer. Heterotetramer of two MnmE and two MnmG subunits. K(+) is required as a cofactor.

The protein localises to the cytoplasm. Exhibits a very high intrinsic GTPase hydrolysis rate. Involved in the addition of a carboxymethylaminomethyl (cmnm) group at the wobble position (U34) of certain tRNAs, forming tRNA-cmnm(5)s(2)U34. The protein is tRNA modification GTPase MnmE of Brucella abortus (strain 2308).